The chain runs to 256 residues: Trans-aconitate 2-methyltransferase (256 aa).

It belongs to the methyltransferase superfamily. Tam family.

The protein localises to the cytoplasm. It carries out the reaction trans-aconitate + S-adenosyl-L-methionine = (E)-3-(methoxycarbonyl)pent-2-enedioate + S-adenosyl-L-homocysteine. In terms of biological role, catalyzes the S-adenosylmethionine monomethyl esterification of trans-aconitate. In Agrobacterium fabrum (strain C58 / ATCC 33970) (Agrobacterium tumefaciens (strain C58)), this protein is Trans-aconitate 2-methyltransferase.